The chain runs to 85 residues: MSILKETKRFMVVAMFIACVFISNNMNVAVANEIGYPGMGRGDRQPGCDHGNCPPDQPANPYHRGCEKSKRCRGPDPPALPRKMI.

The signal sequence occupies residues 1 to 31 (MSILKETKRFMVVAMFIACVFISNNMNVAVA). Cystine bridges form between C48–C53 and C66–C72. The tract at residues 60–85 (NPYHRGCEKSKRCRGPDPPALPRKMI) is disordered. Residues 75 to 85 (PDPPALPRKMI) show a composition bias toward pro residues.

It belongs to the plant rapid alkalinization factor (RALF) family.

Its subcellular location is the secreted. Its function is as follows. Cell signaling peptide that may regulate plant stress, growth, and development. Mediates a rapid alkalinization of extracellular space by mediating a transient increase in the cytoplasmic Ca(2+) concentration leading to a calcium-dependent signaling events through a cell surface receptor and a concomitant activation of some intracellular mitogen-activated protein kinases. This Arabidopsis thaliana (Mouse-ear cress) protein is Protein RALF-like 28 (RALFL28).